The chain runs to 632 residues: DNA polymerase eta (632 aa).

The UmuC domain occupies 26–309 (IAHIDMNAFF…FEITSFWTLG (284 aa)). Residues aspartate 30 and aspartate 155 each contribute to the Mg(2+) site. Residues 545 to 580 (EKTPKLECCKYQVTFTDQKALQEHADYHLALKLSEG) form a UBZ3-type zinc finger. Residues cysteine 552, cysteine 553, histidine 568, and histidine 572 each coordinate Zn(2+). The segment at 598–632 (LLFSRKRPNSQHTATPQKKQVTSSKNILSFFTRKK) is disordered. Polar residues predominate over residues 607 to 626 (SQHTATPQKKQVTSSKNILS). The POL30-binding stretch occupies residues 625–632 (LSFFTRKK).

Belongs to the DNA polymerase type-Y family. Interacts with POL30. This interaction is essential for the polymerase eta function.

Its subcellular location is the nucleus. It carries out the reaction DNA(n) + a 2'-deoxyribonucleoside 5'-triphosphate = DNA(n+1) + diphosphate. Its function is as follows. DNA polymerase specifically involved in DNA repair. Plays an important role in translesion synthesis, where the normal high fidelity DNA polymerases cannot proceed and DNA synthesis stalls. Plays an important role in the repair of UV-induced pyrimidine dimers. Depending on the context, it inserts the correct base, but causes frequent base transitions and transversions. Efficiently incorporates nucleotides opposite to other UV or oxidative DNA damages like O(6)-methylguanine, 7,8-dihydro-8-oxoguanine, 2,6-diamino-4-hydroxy-5-formamidopyrimidine of 2'-deoxyguanosine (FaPydG), or p-benzoquinone DNA adducts. The protein is DNA polymerase eta (RAD30) of Saccharomyces cerevisiae (strain ATCC 204508 / S288c) (Baker's yeast).